A 426-amino-acid polypeptide reads, in one-letter code: 4-hydroxy-3-methylbut-2-en-1-yl diphosphate synthase (flavodoxin) (426 aa).

[4Fe-4S] cluster is bound by residues cysteine 310, cysteine 313, cysteine 356, and glutamate 363.

Belongs to the IspG family. Requires [4Fe-4S] cluster as cofactor.

The enzyme catalyses (2E)-4-hydroxy-3-methylbut-2-enyl diphosphate + oxidized [flavodoxin] + H2O + 2 H(+) = 2-C-methyl-D-erythritol 2,4-cyclic diphosphate + reduced [flavodoxin]. It functions in the pathway isoprenoid biosynthesis; isopentenyl diphosphate biosynthesis via DXP pathway; isopentenyl diphosphate from 1-deoxy-D-xylulose 5-phosphate: step 5/6. In terms of biological role, converts 2C-methyl-D-erythritol 2,4-cyclodiphosphate (ME-2,4cPP) into 1-hydroxy-2-methyl-2-(E)-butenyl 4-diphosphate. The protein is 4-hydroxy-3-methylbut-2-en-1-yl diphosphate synthase (flavodoxin) of Rhodopseudomonas palustris (strain BisA53).